Here is a 137-residue protein sequence, read N- to C-terminus: Bombinin-like peptides 2 (137 aa).

The first 18 residues, 1-18 (MNFKYIVAVSILIASAYA), serve as a signal peptide directing secretion. Asparagine amide is present on N70. Positions 92–112 (DSLEHPEEASEKETRGFNQEE) are disordered. Position 136 is an isoleucine amide (I136).

Belongs to the bombinin family. Expressed by the skin glands.

It is found in the secreted. Its function is as follows. Bombinin-like peptide 2 has antimicrobial activity, but no hemolytic activity. Preliminary evidence indicates that this peptide does not lyse and thus kill the bacteria by its antimicrobial activity. In terms of biological role, bombinin H2 has antibacterial and hemolytic activity. The chain is Bombinin-like peptides 2 from Bombina variegata (Yellow-bellied toad).